We begin with the raw amino-acid sequence, 298 residues long: Tyrosine recombinase XerC (298 aa).

One can recognise a Core-binding (CB) domain in the interval 1–84 (MNHIQEAFLN…TLRTFYEYWM (84 aa)). The Tyr recombinase domain maps to 105–286 (YLPQFFYEEE…SNQQLRKVYL (182 aa)). Active-site residues include Arg-145, Lys-169, His-238, Arg-241, and His-264. Residue Tyr-273 is the O-(3'-phospho-DNA)-tyrosine intermediate of the active site.

The protein belongs to the 'phage' integrase family. XerC subfamily. In terms of assembly, forms a cyclic heterotetrameric complex composed of two molecules of XerC and two molecules of XerD.

Its subcellular location is the cytoplasm. Its function is as follows. Site-specific tyrosine recombinase, which acts by catalyzing the cutting and rejoining of the recombining DNA molecules. The XerC-XerD complex is essential to convert dimers of the bacterial chromosome into monomers to permit their segregation at cell division. It also contributes to the segregational stability of plasmids. In Staphylococcus aureus (strain JH1), this protein is Tyrosine recombinase XerC.